Here is a 226-residue protein sequence, read N- to C-terminus: ATP synthase F(0) complex subunit a (226 aa).

Transmembrane regions (helical) follow at residues 12-32, 68-88, 97-117, 138-158, 182-202, and 203-223; these read PTVLGLPAAVLVILFPPLLIP, WSLMLTSLIIFIASTNLLGLL, QLSMNLAMAIPLWASTVAMGL, IPMLIIIETVSLFIQPLALAV, LAINLPLTLITLTILTLLTIL, and ETAIALIQAYVFTLLVSLYLH.

The protein belongs to the ATPase A chain family. Component of the ATP synthase complex composed at least of ATP5F1A/subunit alpha, ATP5F1B/subunit beta, ATP5MC1/subunit c (homooctomer), MT-ATP6/subunit a, MT-ATP8/subunit 8, ATP5ME/subunit e, ATP5MF/subunit f, ATP5MG/subunit g, ATP5MK/subunit k, ATP5MJ/subunit j, ATP5F1C/subunit gamma, ATP5F1D/subunit delta, ATP5F1E/subunit epsilon, ATP5PF/subunit F6, ATP5PB/subunit b, ATP5PD/subunit d, ATP5PO/subunit OSCP. ATP synthase complex consists of a soluble F(1) head domain (subunits alpha(3) and beta(3)) - the catalytic core - and a membrane F(0) domain - the membrane proton channel (subunits c, a, 8, e, f, g, k and j). These two domains are linked by a central stalk (subunits gamma, delta, and epsilon) rotating inside the F1 region and a stationary peripheral stalk (subunits F6, b, d, and OSCP). Interacts with DNAJC30; interaction is direct.

The protein resides in the mitochondrion inner membrane. The catalysed reaction is H(+)(in) = H(+)(out). In terms of biological role, subunit a, of the mitochondrial membrane ATP synthase complex (F(1)F(0) ATP synthase or Complex V) that produces ATP from ADP in the presence of a proton gradient across the membrane which is generated by electron transport complexes of the respiratory chain. ATP synthase complex consist of a soluble F(1) head domain - the catalytic core - and a membrane F(1) domain - the membrane proton channel. These two domains are linked by a central stalk rotating inside the F(1) region and a stationary peripheral stalk. During catalysis, ATP synthesis in the catalytic domain of F(1) is coupled via a rotary mechanism of the central stalk subunits to proton translocation. With the subunit c (ATP5MC1), forms the proton-conducting channel in the F(0) domain, that contains two crucial half-channels (inlet and outlet) that facilitate proton movement from the mitochondrial intermembrane space (IMS) into the matrix. Protons are taken up via the inlet half-channel and released through the outlet half-channel, following a Grotthuss mechanism. The protein is ATP synthase F(0) complex subunit a of Pongo abelii (Sumatran orangutan).